Here is a 400-residue protein sequence, read N- to C-terminus: Phosphoglycerate kinase (400 aa).

Residues 23 to 25 (DLN), R38, 61 to 64 (HFGR), R120, and R153 contribute to the substrate site. ATP contacts are provided by residues K203, E325, and 355-358 (GGDT).

It belongs to the phosphoglycerate kinase family. Monomer.

Its subcellular location is the cytoplasm. The catalysed reaction is (2R)-3-phosphoglycerate + ATP = (2R)-3-phospho-glyceroyl phosphate + ADP. Its pathway is carbohydrate degradation; glycolysis; pyruvate from D-glyceraldehyde 3-phosphate: step 2/5. The protein is Phosphoglycerate kinase of Agrobacterium fabrum (strain C58 / ATCC 33970) (Agrobacterium tumefaciens (strain C58)).